A 481-amino-acid polypeptide reads, in one-letter code: Ribosomal protein uS12 methylthiotransferase RimO (481 aa).

The MTTase N-terminal domain maps to 8 to 124 (MTVHLVSMGC…IAGRLRTILD (117 aa)). [4Fe-4S] cluster-binding residues include Cys17, Cys53, and Cys87. The segment at 148–188 (PTARAEVSVPGHGTAPDLSASVTPDSGPRATRRRLGTGPSA) is disordered. Positions 182 to 413 (LGTGPSAPLK…DLTDELVSQR (232 aa)) constitute a Radical SAM core domain. 3 residues coordinate [4Fe-4S] cluster: Cys196, Cys200, and Cys203. The TRAM domain occupies 415–480 (EDRIGTRGRV…GVDLVARPAN (66 aa)).

The protein belongs to the methylthiotransferase family. RimO subfamily. The cofactor is [4Fe-4S] cluster.

It localises to the cytoplasm. The catalysed reaction is L-aspartate(89)-[ribosomal protein uS12]-hydrogen + (sulfur carrier)-SH + AH2 + 2 S-adenosyl-L-methionine = 3-methylsulfanyl-L-aspartate(89)-[ribosomal protein uS12]-hydrogen + (sulfur carrier)-H + 5'-deoxyadenosine + L-methionine + A + S-adenosyl-L-homocysteine + 2 H(+). Catalyzes the methylthiolation of an aspartic acid residue of ribosomal protein uS12. The sequence is that of Ribosomal protein uS12 methylthiotransferase RimO from Cutibacterium acnes (strain DSM 16379 / KPA171202) (Propionibacterium acnes).